A 508-amino-acid chain; its full sequence is Photosystem II CP47 reaction center protein (508 aa).

6 helical membrane-spanning segments follow: residues 21-36, 101-115, 140-156, 203-218, 237-252, and 457-472; these read SVHI…WAGS, IVFS…IWHW, GIHL…FGAF, IAAG…FHLS, VLSS…AFVV, and SFAL…HGAR.

Belongs to the PsbB/PsbC family. PsbB subfamily. As to quaternary structure, PSII is composed of 1 copy each of membrane proteins PsbA, PsbB, PsbC, PsbD, PsbE, PsbF, PsbH, PsbI, PsbJ, PsbK, PsbL, PsbM, PsbT, PsbX, PsbY, PsbZ, Psb30/Ycf12, at least 3 peripheral proteins of the oxygen-evolving complex and a large number of cofactors. It forms dimeric complexes. Requires Binds multiple chlorophylls. PSII binds additional chlorophylls, carotenoids and specific lipids. as cofactor.

The protein localises to the plastid. Its subcellular location is the chloroplast thylakoid membrane. In terms of biological role, one of the components of the core complex of photosystem II (PSII). It binds chlorophyll and helps catalyze the primary light-induced photochemical processes of PSII. PSII is a light-driven water:plastoquinone oxidoreductase, using light energy to abstract electrons from H(2)O, generating O(2) and a proton gradient subsequently used for ATP formation. The sequence is that of Photosystem II CP47 reaction center protein from Gossypium barbadense (Sea Island cotton).